The following is an 803-amino-acid chain: Urocanate reductase (803 aa).

At serine 258 the chain carries FMN phosphoryl serine. 7 residues coordinate FAD: alanine 311, glutamate 330, asparagine 338, threonine 339, glycine 343, glycine 344, and aspartate 573. Arginine 632 serves as the catalytic Proton donor. Residues histidine 739, glutamate 768, alanine 783, and leucine 784 each coordinate FAD.

It belongs to the FAD-dependent oxidoreductase 2 family. FRD/SDH subfamily. It depends on FAD as a cofactor. FMN is required as a cofactor.

It catalyses the reaction dihydrourocanate + A = urocanate + AH2. Its function is as follows. Catalyzes the two-electron reduction of urocanate to dihydrourocanate (also named imidazole propionate or deamino-histidine). Dihydrourocanate is present at higher concentrations in subjects with type 2 diabetes, and directly impairs glucose tolerance and insulin signaling at the level of insulin receptor substrate (IRS) through activation of p38 gamma (MAPK12)-p62-mTORC1. Therefore, the UrdA enzyme from the gut bacteria S.mutans strain UA159 may contribute to the pathogenesis of type 2 diabetes by producing the microbial metabolite dihydrourocanate. This Streptococcus mutans serotype c (strain ATCC 700610 / UA159) protein is Urocanate reductase.